The following is a 348-amino-acid chain: D-alanine--D-alanine ligase (348 aa).

One can recognise an ATP-grasp domain in the interval 132 to 334 (KRVLESIGIP…YPDLIEELVT (203 aa)). An ATP-binding site is contributed by 162 to 217 (LARLTFPIFVKPANMGSSVGISKAQTKVELRKAIQLALTYDSRVLIEQGVVAREIE). Mg(2+) contacts are provided by D288, E301, and N303.

Belongs to the D-alanine--D-alanine ligase family. Mg(2+) serves as cofactor. Mn(2+) is required as a cofactor.

Its subcellular location is the cytoplasm. The catalysed reaction is 2 D-alanine + ATP = D-alanyl-D-alanine + ADP + phosphate + H(+). The protein operates within cell wall biogenesis; peptidoglycan biosynthesis. Its function is as follows. Cell wall formation. The polypeptide is D-alanine--D-alanine ligase (Streptococcus pyogenes serotype M6 (strain ATCC BAA-946 / MGAS10394)).